Reading from the N-terminus, the 584-residue chain is Arginine--tRNA ligase (584 aa).

The short motif at 130–140 is the 'HIGH' region element; the sequence is PNVAKEMHVGH.

It belongs to the class-I aminoacyl-tRNA synthetase family. As to quaternary structure, monomer.

It is found in the cytoplasm. It carries out the reaction tRNA(Arg) + L-arginine + ATP = L-arginyl-tRNA(Arg) + AMP + diphosphate. The sequence is that of Arginine--tRNA ligase from Protochlamydia amoebophila (strain UWE25).